A 498-amino-acid polypeptide reads, in one-letter code: ATP synthase subunit beta, chloroplastic (498 aa).

172–179 (GGAGVGKT) is a binding site for ATP.

It belongs to the ATPase alpha/beta chains family. In terms of assembly, F-type ATPases have 2 components, CF(1) - the catalytic core - and CF(0) - the membrane proton channel. CF(1) has five subunits: alpha(3), beta(3), gamma(1), delta(1), epsilon(1). CF(0) has four main subunits: a(1), b(1), b'(1) and c(9-12).

It localises to the plastid. The protein resides in the chloroplast thylakoid membrane. It carries out the reaction ATP + H2O + 4 H(+)(in) = ADP + phosphate + 5 H(+)(out). In terms of biological role, produces ATP from ADP in the presence of a proton gradient across the membrane. The catalytic sites are hosted primarily by the beta subunits. This Phoenix dactylifera (Date palm) protein is ATP synthase subunit beta, chloroplastic.